Reading from the N-terminus, the 74-residue chain is Protein SlyX homolog (74 aa).

The protein belongs to the SlyX family.

This Neisseria meningitidis serogroup C / serotype 2a (strain ATCC 700532 / DSM 15464 / FAM18) protein is Protein SlyX homolog.